The following is a 1341-amino-acid chain: DNA-directed RNA polymerase subunit beta (1341 aa).

This sequence belongs to the RNA polymerase beta chain family. The RNAP catalytic core consists of 2 alpha, 1 beta, 1 beta' and 1 omega subunit. When a sigma factor is associated with the core the holoenzyme is formed, which can initiate transcription.

It carries out the reaction RNA(n) + a ribonucleoside 5'-triphosphate = RNA(n+1) + diphosphate. In terms of biological role, DNA-dependent RNA polymerase catalyzes the transcription of DNA into RNA using the four ribonucleoside triphosphates as substrates. The sequence is that of DNA-directed RNA polymerase subunit beta from Blochmanniella pennsylvanica (strain BPEN).